A 1165-amino-acid chain; its full sequence is Leptin receptor (1165 aa).

Positions 1–21 (MICQKFCVVLLHWEFIYVITA) are cleaved as a signal peptide. Residues 22–839 (FNLSYPITPW…QDDIEKHQSD (818 aa)) are Extracellular-facing. N-linked (GlcNAc...) asparagine glycosylation is found at Asn23, Asn41, Asn56, Asn73, Asn81, and Asn98. Intrachain disulfides connect Cys37–Cys90, Cys89–Cys99, Cys131–Cys142, Cys186–Cys196, and Cys188–Cys193. An N-linked (GlcNAc...) asparagine glycan is attached at Asn187. N-linked (GlcNAc...) asparagine glycosylation is found at Asn206, Asn276, Asn347, and Asn397. In terms of domain architecture, Fibronectin type-III 1 spans 239 to 333 (PPLGLHMEIT…TPRVFTTQDV (95 aa)). Residues 331-429 (QDVIYFPPKI…HRYAELYVID (99 aa)) enclose the Ig-like domain. 5 disulfides stabilise this stretch: Cys352-Cys412, Cys413-Cys418, Cys436-Cys447, Cys473-Cys528, and Cys488-Cys498. The segment at 467 to 484 (HRSSLYCSDIPSIHPISE) is leptin-binding. N-linked (GlcNAc...) asparagine glycosylation is found at Asn516, Asn624, Asn659, Asn688, Asn697, Asn728, and Asn750. Fibronectin type-III domains follow at residues 539–634 (PPSS…TVVM), 639–732 (PMRG…LTFS), and 740–833 (IVQS…QDDI). The short motif at 622–626 (WSNWS) is the WSXWS motif element. The chain crosses the membrane as a helical span at residues 840–862 (AGLYVIVPVIISSSILLLGTLLI). Over 863 to 1165 (SHQRMKKLFW…MENKMCDLTV (303 aa)) the chain is Cytoplasmic. The Box 1 motif signature appears at 871–879 (FWEDVPNPK). Phosphoserine is present on Ser882. The segment at 893 to 898 (ETFEHL) is required for JAK2 activation. The interval 898–906 (LFIKHTASV) is required for STAT3 phosphorylation. Tyr986 carries the post-translational modification Phosphotyrosine; by JAK2. Tyr1079 is subject to Phosphotyrosine. Residue Tyr1141 is modified to Phosphotyrosine; by JAK2.

The protein belongs to the type I cytokine receptor family. Type 2 subfamily. In terms of assembly, present as a mixture of monomers and dimers. The phosphorylated receptor binds a number of SH2 domain-containing proteins such as JAK2, STAT3, PTPN11, and SOCS3. Interaction with SOCS3 inhibits JAK/STAT signaling and MAPK cascade. In terms of processing, on ligand binding, phosphorylated on two conserved C-terminal tyrosine residues (isoform B only) by JAK2. Tyr-986 is required for complete binding and activation of PTPN11, ERK/FOS activation,for interaction with SOCS3 and SOCS3 mediated inhibition of leptin signaling. Phosphorylation on Tyr-1141 is required for STAT3 binding/activation. Phosphorylation of Tyr-1079 has a more accessory role. In terms of tissue distribution, isoform A is expressed in fetal liver and in hematopoietic tissues and choroid plexus. In adults highest expression in heart, liver, small intestine, prostate and ovary. Low level in lung and kidney. Isoform B is highly expressed in hypothalamus, but also in skeletal muscle. Detected in fundic and antral epithelial cells of the gastric mucosa. Isoform B and isoform A are expressed by NK cells (at protein level).

The protein resides in the cell membrane. The protein localises to the basolateral cell membrane. Its subcellular location is the secreted. In terms of biological role, receptor for hormone LEP/leptin. On ligand binding, mediates LEP central and peripheral effects through the activation of different signaling pathways such as JAK2/STAT3 and MAPK cascade/FOS. In the hypothalamus, LEP acts as an appetite-regulating factor that induces a decrease in food intake and an increase in energy consumption by inducing anorexinogenic factors and suppressing orexigenic neuropeptides, also regulates bone mass and secretion of hypothalamo-pituitary-adrenal hormones. In the periphery, increases basal metabolism, influences reproductive function, regulates pancreatic beta-cell function and insulin secretion, is pro-angiogenic and affects innate and adaptive immunity. Control of energy homeostasis and melanocortin production (stimulation of POMC and full repression of AgRP transcription) is mediated by STAT3 signaling, whereas distinct signals regulate NPY and the control of fertility, growth and glucose homeostasis. Involved in the regulation of counter-regulatory response to hypoglycemia by inhibiting neurons of the parabrachial nucleus. Has a specific effect on T lymphocyte responses, differentially regulating the proliferation of naive and memory T -ells. Leptin increases Th1 and suppresses Th2 cytokine production. Functionally, may transport LEP across the blood-brain barrier. Binds LEP and mediates LEP endocytosis. Does not induce phosphorylation of and activate STAT3. Antagonizes Isoform A and isoform B-mediated LEP binding and endocytosis. In Homo sapiens (Human), this protein is Leptin receptor (LEPR).